We begin with the raw amino-acid sequence, 350 residues long: Protein MGF 360-12L (350 aa).

An ANK repeat occupies 57 to 89 (DLNTALVKAVRENNYNLIKLFAEWGANINYGLV).

The protein belongs to the asfivirus MGF 360 family.

In terms of biological role, plays a role in virus cell tropism, and may be required for efficient virus replication in macrophages. This Ornithodoros (relapsing fever ticks) protein is Protein MGF 360-12L.